The primary structure comprises 270 residues: Orotidine 5'-phosphate decarboxylase (270 aa).

The active-site Proton donor is the K89.

Belongs to the OMP decarboxylase family. Type 2 subfamily.

The catalysed reaction is orotidine 5'-phosphate + H(+) = UMP + CO2. The protein operates within pyrimidine metabolism; UMP biosynthesis via de novo pathway; UMP from orotate: step 2/2. This is Orotidine 5'-phosphate decarboxylase from Dehalococcoides mccartyi (strain ATCC BAA-2266 / KCTC 15142 / 195) (Dehalococcoides ethenogenes (strain 195)).